Consider the following 462-residue polypeptide: Sugar transporter ERD6-like 12 (462 aa).

Helical transmembrane passes span 25 to 45 (LLIFSTFIIVSASFTFGAAIG), 62 to 82 (LAQFSLFGSLSTFGGMIGAIF), 101 to 121 (LFCITGWLAISLAKDIIWLDM), 124 to 144 (FLVGIGVGLISYVVPVYIAEI), 151 to 171 (GAFTFSNQLLQNCGVAVVYYF), 179 to 199 (TLAIIGSIPCWIQVIGLFFIP), 262 to 282 (LTIGIGLMLLQQLCGTAGISS), 297 to 317 (IGMMVLSLIVVPKSLMGLILV), 326 to 346 (LMTSALGLCLSCITLAVAFGV), 358 to 378 (IFCFIGILSFTMMFAIGMGAL), 399 to 419 (VTIANWFTGWIANYAFNFMLV), and 424 to 444 (GTFIISAIICGATIVFTWCLV).

This sequence belongs to the major facilitator superfamily. Sugar transporter (TC 2.A.1.1) family.

The protein resides in the membrane. Functionally, sugar transporter. In Arabidopsis thaliana (Mouse-ear cress), this protein is Sugar transporter ERD6-like 12 (SUGTL5).